Consider the following 313-residue polypeptide: Alpha/beta-gliadin clone PW8142 (313 aa).

An N-terminal signal peptide occupies residues 1–20 (MKTFLILALVATTATTAVRV). Low complexity predominate over residues 22 to 55 (VPQLQPKNPSQQQPQEQVPLVQQQQFPGQQQQFP). Disordered regions lie at residues 22–122 (VPQL…QQAQ) and 234–272 (QQPSSQVSFQQPQQQYPSSQGSFQPSQQNPQAQGSVQPQ). Pro residues-rich tracts occupy residues 56 to 68 (PQQPYPQPQPFPS) and 78 to 101 (FPQPQPFLPQLPYPQPQSFPPQQP). 2 stretches are compositionally biased toward low complexity: residues 102-122 (YPQQRPKYLQPQQPISQQQAQ) and 234-264 (QQPSSQVSFQQPQQQYPSSQGSFQPSQQNPQ).

This sequence belongs to the gliadin/glutenin family. Post-translationally, substrate of transglutaminase.

In terms of biological role, gliadin is the major seed storage protein in wheat. This chain is Alpha/beta-gliadin clone PW8142, found in Triticum aestivum (Wheat).